Reading from the N-terminus, the 171-residue chain is Methylated-DNA--protein-cysteine methyltransferase (171 aa).

C139 acts as the Nucleophile; methyl group acceptor in catalysis.

It belongs to the MGMT family.

Its subcellular location is the cytoplasm. The enzyme catalyses a 6-O-methyl-2'-deoxyguanosine in DNA + L-cysteinyl-[protein] = S-methyl-L-cysteinyl-[protein] + a 2'-deoxyguanosine in DNA. The catalysed reaction is a 4-O-methyl-thymidine in DNA + L-cysteinyl-[protein] = a thymidine in DNA + S-methyl-L-cysteinyl-[protein]. In terms of biological role, involved in the cellular defense against the biological effects of O6-methylguanine (O6-MeG) and O4-methylthymine (O4-MeT) in DNA. Repairs the methylated nucleobase in DNA by stoichiometrically transferring the methyl group to a cysteine residue in the enzyme. This is a suicide reaction: the enzyme is irreversibly inactivated. This is Methylated-DNA--protein-cysteine methyltransferase from Salmonella typhi.